The sequence spans 466 residues: Glycosyl hydrolase family 109 protein (466 aa).

Residues M1 to A30 constitute a signal peptide (tat-type signal). Residues S59–R60, D81, W130–H133, E151–V152, and N180 each bind NAD(+). A substrate-binding site is contributed by Y209. A241–W245 is an NAD(+) binding site. Substrate contacts are provided by residues R246, Y258 to H261, and Y340. Residue Y258 participates in NAD(+) binding.

This sequence belongs to the Gfo/Idh/MocA family. Glycosyl hydrolase 109 subfamily. Requires NAD(+) as cofactor. Predicted to be exported by the Tat system. The position of the signal peptide cleavage has not been experimentally proven.

Functionally, glycosidase. The chain is Glycosyl hydrolase family 109 protein from Parabacteroides distasonis (strain ATCC 8503 / DSM 20701 / CIP 104284 / JCM 5825 / NCTC 11152).